An 88-amino-acid polypeptide reads, in one-letter code: UPF0298 protein BA_4142/GBAA_4142/BAS3844 (88 aa).

Belongs to the UPF0298 family.

The protein localises to the cytoplasm. This is UPF0298 protein BA_4142/GBAA_4142/BAS3844 from Bacillus anthracis.